Here is a 632-residue protein sequence, read N- to C-terminus: Arginyl-tRNA--protein transferase 1 (632 aa).

Residues 1-18 (MSLKNDASSSHDGGSNRE) are compositionally biased toward polar residues. Disordered stretches follow at residues 1–27 (MSLK…HGRR), 113–144 (KLDV…AKSE), 284–312 (NGNI…HQAR), and 517–580 (PAAS…NDIN). Positions 113-122 (KLDVQPREQR) are enriched in basic and acidic residues. Residues 285-296 (GNISRGANSLDG) are compositionally biased toward polar residues. The segment covering 298–310 (ETLHAKKDSENHQ) has biased composition (basic and acidic residues). Residues 538-563 (SDEDEDEDEDDDDDDDDDEEMYETES) are compositionally biased toward acidic residues. Residues 564 to 578 (EDSHIESDPGSKDND) are compositionally biased toward basic and acidic residues.

It belongs to the R-transferase family.

It carries out the reaction an N-terminal L-alpha-aminoacyl-[protein] + L-arginyl-tRNA(Arg) = an N-terminal L-arginyl-L-aminoacyl-[protein] + tRNA(Arg) + H(+). Involved in the post-translational conjugation of arginine to the N-terminal aspartate or glutamate of a protein. This arginylation is required for degradation of the protein via the ubiquitin pathway. Component of the N-end rule pathway with ATE2 and PRT6. The N-end rule pathway regulates seed after-ripening, seedling sugar sensitivity, seedling lipid breakdown, and abscisic acid (ABA) sensitivity of germination. The end-rule pathway regulates various aspects of leaf and shoot development. Involved in the oxygen-dependent N-arginylation of RAP2-12, an activator of hypoxic gene expression. This N-terminal modification leads to ubiquitination by PRT6 and subsequent degradation of RAP2-12 under aerobic conditions. Has an important role in the progression of leaf senescence. Involved in disease resistance. The end-rule pathway plays a role in regulating the timing and amplitude of the immune response following infection with the bacterial pathogen Pseudomonas syringae pv tomato. Regulates the biosynthesis of plant-defense metabolites such as glucosinolates, and the biosynthesis and response to the phytohormone jasmonate (JA), which plays a key role in plant immunity. The polypeptide is Arginyl-tRNA--protein transferase 1 (Arabidopsis thaliana (Mouse-ear cress)).